The primary structure comprises 738 residues: Protein Aster-B (738 aa).

The segment at 1–81 is disordered; that stretch reads MKGFKLSCTA…SGGKNSKKSQ (81 aa). A compositionally biased stretch (polar residues) spans 8–19; sequence CTASNSNRSTPA. Phosphoserine is present on residues Ser-28 and Ser-30. A compositionally biased stretch (basic and acidic residues) spans 41–51; it reads MVEKGSDHSSD. Residues 59–70 show a composition bias toward low complexity; that stretch reads QGVQRSCSSQSG. One can recognise a GRAM domain in the interval 96–163; the sequence is EDFRKLFKQL…KDICSMTKEK (68 aa). The disordered stretch occupies residues 254 to 299; that stretch reads EENEVNDSSSKSSIETKPDASPQLPKKSITNSTLTSTGSSEAPVSF. Positions 259-268 are enriched in polar residues; the sequence is NDSSSKSSIE. The residue at position 274 (Ser-274) is a Phosphoserine. The segment covering 281–295 has biased composition (polar residues); it reads SITNSTLTSTGSSEA. A VASt domain is found at 372-543; it reads SGRQYVNEVF…ELTKTESTYL (172 aa). Tyr-389 bears the Phosphotyrosine mark. Phosphoserine occurs at positions 550 and 581. 3 positions are modified to phosphothreonine: Thr-584, Thr-585, and Thr-587. Residues 623 to 643 form a helical membrane-spanning segment; sequence LLLVISCVICFSLVLLVVLNM.

As to expression, highly expressed in the adrenal gland (at protein level) and brain. Also found in the kidney, testis and macrophages.

The protein localises to the endoplasmic reticulum membrane. It is found in the cell membrane. Its function is as follows. Cholesterol transporter that mediates non-vesicular transport of cholesterol from the plasma membrane (PM) to the endoplasmic reticulum (ER). Contains unique domains for binding cholesterol and the PM, thereby serving as a molecular bridge for the transfer of cholesterol from the PM to the ER. Plays a crucial role in cholesterol homeostasis in the adrenal gland and has the unique ability to localize to the PM based on the level of membrane cholesterol. In lipid-poor conditions localizes to the ER membrane and in response to excess cholesterol in the PM is recruited to the endoplasmic reticulum-plasma membrane contact sites (EPCS) which is mediated by the GRAM domain. At the EPCS, the sterol-binding VASt/ASTER domain binds to the cholesterol in the PM and facilitates its transfer from the PM to ER. This chain is Protein Aster-B (Gramd1b), found in Mus musculus (Mouse).